Consider the following 666-residue polypeptide: Probable potassium transport system protein Kup (666 aa).

12 consecutive transmembrane segments (helical) span residues G16–M36, I58–L78, P100–T120, I141–G161, F165–L185, I221–L241, W253–A273, L292–I312, L343–F363, Y373–I393, P399–A419, and F424–I444.

The protein belongs to the HAK/KUP transporter (TC 2.A.72) family.

It localises to the cell membrane. The catalysed reaction is K(+)(in) + H(+)(in) = K(+)(out) + H(+)(out). In terms of biological role, transport of potassium into the cell. Likely operates as a K(+):H(+) symporter. This Streptococcus pyogenes serotype M18 (strain MGAS8232) protein is Probable potassium transport system protein Kup.